Consider the following 184-residue polypeptide: Ribosome-recycling factor (184 aa).

Positions 133-153 (DSNDELKKQQKNSDITEDDLR) are disordered.

Belongs to the RRF family.

It is found in the cytoplasm. In terms of biological role, responsible for the release of ribosomes from messenger RNA at the termination of protein biosynthesis. May increase the efficiency of translation by recycling ribosomes from one round of translation to another. In Staphylococcus saprophyticus subsp. saprophyticus (strain ATCC 15305 / DSM 20229 / NCIMB 8711 / NCTC 7292 / S-41), this protein is Ribosome-recycling factor.